A 113-amino-acid chain; its full sequence is Beta-microseminoprotein A1 (113 aa).

An N-terminal signal peptide occupies residues 1–20; the sequence is MNVLLGGLVIFATFVTLCNG. 5 cysteine pairs are disulfide-bonded: cysteine 22–cysteine 70, cysteine 38–cysteine 62, cysteine 57–cysteine 93, cysteine 60–cysteine 69, and cysteine 84–cysteine 107.

Belongs to the beta-microseminoprotein family.

The protein localises to the secreted. This is Beta-microseminoprotein A1 (MSPA) from Saguinus oedipus (Cotton-top tamarin).